The chain runs to 76 residues: DNA-directed RNA polymerase subunit epsilon (76 aa).

This sequence belongs to the RNA polymerase subunit epsilon family. RNAP is composed of a core of 2 alpha, a beta and a beta' subunit. The core is associated with a delta subunit, and at least one of epsilon or omega. When a sigma factor is associated with the core the holoenzyme is formed, which can initiate transcription.

It carries out the reaction RNA(n) + a ribonucleoside 5'-triphosphate = RNA(n+1) + diphosphate. Its function is as follows. A non-essential component of RNA polymerase (RNAP). The chain is DNA-directed RNA polymerase subunit epsilon from Streptococcus pyogenes serotype M1.